We begin with the raw amino-acid sequence, 1474 residues long: Alpha-2-macroglobulin (1474 aa).

Positions 1–23 (MGKNKLLHPSLVLLLLVLLPTDA) are cleaved as a signal peptide. A disulfide bridge connects residues C48 and C86. N55, N70, and N247 each carry an N-linked (GlcNAc...) asparagine glycan. Disulfide bonds link C251–C299 and C269–C287. Residues N396 and N410 are each glycosylated (N-linked (GlcNAc...) asparagine). Cystine bridges form between C470/C563, C595/C771, C642/C689, C821/C849, C847/C883, C921/C1321, C1079/C1127, and C1352/C1467. Positions 690–728 (PQLQQYEMHGPEGLRVGFYESDVMGRGHARLVHAEEPPT) are bait region. Isoglutamyl lysine isopeptide (Gln-Lys) (interchain with K-? in other proteins) cross-links involve residues Q693 and Q694. 3 inhibitory regions span residues 704-709 (RVGFYE), 719-723 (RLVHA), and 730-735 (TVRKYF). Residue N869 is glycosylated (N-linked (GlcNAc...) asparagine). A cross-link (isoglutamyl cysteine thioester (Cys-Gln)) is located at residues 972 to 975 (CGEQ). N991 carries an N-linked (GlcNAc...) asparagine glycan. A glycan (N-linked (GlcNAc...) asparagine) is linked at N1424.

The protein belongs to the protease inhibitor I39 (alpha-2-macroglobulin) family. As to quaternary structure, homotetramer; disulfide-linked. Plasma.

Its subcellular location is the secreted. Its function is as follows. Is able to inhibit all four classes of proteinases by a unique 'trapping' mechanism. This protein has a peptide stretch, called the 'bait region' which contains specific cleavage sites for different proteinases. When a proteinase cleaves the bait region, a conformational change is induced in the protein which traps the proteinase. The entrapped enzyme remains active against low molecular weight substrates (activity against high molecular weight substrates is greatly reduced). Following cleavage in the bait region a thioester bond is hydrolyzed and mediates the covalent binding of the protein to the proteinase. In Pongo abelii (Sumatran orangutan), this protein is Alpha-2-macroglobulin (A2M).